We begin with the raw amino-acid sequence, 275 residues long: N-(5'-phosphoribosyl)anthranilate isomerase 2, chloroplastic (275 aa).

Residues 1–32 constitute a chloroplast transit peptide; that stretch reads MSTGISTDLHVHFGALNFSKTYKSGLSNRTVS.

The protein belongs to the TrpF family. As to expression, expressed in roots and shoots.

It is found in the plastid. The protein resides in the chloroplast. It carries out the reaction N-(5-phospho-beta-D-ribosyl)anthranilate = 1-(2-carboxyphenylamino)-1-deoxy-D-ribulose 5-phosphate. The protein operates within amino-acid biosynthesis; L-tryptophan biosynthesis; L-tryptophan from chorismate: step 3/5. This chain is N-(5'-phosphoribosyl)anthranilate isomerase 2, chloroplastic (PAI2), found in Arabidopsis thaliana (Mouse-ear cress).